We begin with the raw amino-acid sequence, 232 residues long: Uracil-DNA glycosylase (232 aa).

Aspartate 64 acts as the Proton acceptor in catalysis.

This sequence belongs to the uracil-DNA glycosylase (UDG) superfamily. UNG family.

Its subcellular location is the cytoplasm. It carries out the reaction Hydrolyzes single-stranded DNA or mismatched double-stranded DNA and polynucleotides, releasing free uracil.. Functionally, excises uracil residues from the DNA which can arise as a result of misincorporation of dUMP residues by DNA polymerase or due to deamination of cytosine. In Shouchella clausii (strain KSM-K16) (Alkalihalobacillus clausii), this protein is Uracil-DNA glycosylase.